Consider the following 491-residue polypeptide: NADH-quinone oxidoreductase subunit N (491 aa).

14 helical membrane passes run 6–26 (TLAP…INWI), 37–57 (VAYP…GMNA), 69–89 (LVVI…GLFV), 103–123 (MFAG…IVMI), 128–148 (FLTL…LVAL), 163–183 (FVLG…MYGA), 206–226 (LAFG…AAPF), 238–258 (PTAV…ALFI), 273–293 (QMML…TAIV), 301–321 (LAYS…SGVV), 335–355 (AMFY…IILL), 379–399 (FAFL…TVGF), 413–433 (GMTW…FYYL), and 458–478 (SMLS…AALM).

The protein belongs to the complex I subunit 2 family. In terms of assembly, NDH-1 is composed of 14 different subunits. Subunits NuoA, H, J, K, L, M, N constitute the membrane sector of the complex.

It is found in the cell inner membrane. The catalysed reaction is a quinone + NADH + 5 H(+)(in) = a quinol + NAD(+) + 4 H(+)(out). Functionally, NDH-1 shuttles electrons from NADH, via FMN and iron-sulfur (Fe-S) centers, to quinones in the respiratory chain. The immediate electron acceptor for the enzyme in this species is believed to be ubiquinone. Couples the redox reaction to proton translocation (for every two electrons transferred, four hydrogen ions are translocated across the cytoplasmic membrane), and thus conserves the redox energy in a proton gradient. The polypeptide is NADH-quinone oxidoreductase subunit N (Cupriavidus taiwanensis (strain DSM 17343 / BCRC 17206 / CCUG 44338 / CIP 107171 / LMG 19424 / R1) (Ralstonia taiwanensis (strain LMG 19424))).